The primary structure comprises 283 residues: MKIFEKAPAKLNLGLDIKGRCDDGYHELAMIMVSIDLNDYVTISELKEDCIVIDSDSSKMPLNNDNDVFKAADIIKNQYGINKGVHIRLEKSIPVCAGLGGGSTDAAATIRALNRLWNLQMDYDEMVAIGFKIGSDVPYCLGGGCSLVLGKGEIVKPLPTLRPCWIVLVKPDFGISTKSIFRDIDCKSISRVDIDLLKSAILSSDYQLMVKSMGNSLEDITITKNPVISTIKERMLNSGADVALMTGSGPTVFSMCSTEKKADRVFNSMKGFCKEVYKVRLLR.

Lys10 is an active-site residue. 94–104 (PVCAGLGGGST) contacts ATP. The active site involves Asp136.

This sequence belongs to the GHMP kinase family. IspE subfamily.

The enzyme catalyses 4-CDP-2-C-methyl-D-erythritol + ATP = 4-CDP-2-C-methyl-D-erythritol 2-phosphate + ADP + H(+). Functionally, catalyzes the phosphorylation of the position 2 hydroxy group of 4-diphosphocytidyl-2C-methyl-D-erythritol. The polypeptide is Putative 4-diphosphocytidyl-2-C-methyl-D-erythritol kinase (ispE) (Streptococcus agalactiae serotype Ia (strain ATCC 27591 / A909 / CDC SS700)).